The chain runs to 174 residues: Transcriptional repressor NrdR (174 aa).

Residues 3-34 (CPFCQHNDTRVIDSRVSEDGTTIRRRRECEAC) fold into a zinc finger. The ATP-cone domain maps to 49 to 139 (PTVVKSDGGR…VYRSFQDVAD (91 aa)).

It belongs to the NrdR family. It depends on Zn(2+) as a cofactor.

In terms of biological role, negatively regulates transcription of bacterial ribonucleotide reductase nrd genes and operons by binding to NrdR-boxes. The chain is Transcriptional repressor NrdR from Xanthomonas axonopodis pv. citri (strain 306).